Reading from the N-terminus, the 272-residue chain is MSDHPGPGAVTPELFGVGGDWLAVTAGESGASVFRAADATRYAKCVPAADAAGLEAERDRIAWLSGQGVPGPRVLDWYAGDAGACLVTRAVPGVPADRVGADDLRTAWGAVADAVRRLHEVPVASCPFRRGLDSVVDAARDVVARGAVHPEFLPVEQRLVPPAELLARLTGELARRRDQEAADTVVCHGDLCLPNIVLHPETLEVSGFIDLGRLGAADRHADLALLLANARETWVDEERARFADAAFAERYGIAPDPERLRFYLHLDPLTWG.

The active-site Proton acceptor is the Asp-190.

The protein belongs to the aminoglycoside phosphotransferase family.

It carries out the reaction streptomycin + ATP = streptomycin 3''-phosphate + ADP + H(+). Its function is as follows. The aminoglycoside phosphotransferases achieve inactivation of their antibiotic substrates by phosphorylation. The sequence is that of Streptomycin 3''-kinase (aphE) from Streptomyces griseus.